The primary structure comprises 152 residues: Large ribosomal subunit protein bL9 (152 aa).

The protein belongs to the bacterial ribosomal protein bL9 family.

Binds to the 23S rRNA. The sequence is that of Large ribosomal subunit protein bL9 from Mycobacterium bovis (strain ATCC BAA-935 / AF2122/97).